A 628-amino-acid chain; its full sequence is Propionate--CoA ligase (628 aa).

It belongs to the ATP-dependent AMP-binding enzyme family.

It carries out the reaction propanoate + ATP + CoA = propanoyl-CoA + AMP + diphosphate. It functions in the pathway organic acid metabolism; propanoate degradation. Functionally, catalyzes the synthesis of propionyl-CoA from propionate and CoA. Also converts acetate to acetyl-CoA but with a lower specific activity. The protein is Propionate--CoA ligase (prpE) of Salmonella typhimurium (strain LT2 / SGSC1412 / ATCC 700720).